We begin with the raw amino-acid sequence, 272 residues long: MNKQQLFENIQKKKSFLCVGLDTDIKKIPEHLLKEEDPIFAFNKAIIDATAPYCIAYKPNLAFYESMGVKGWIAFEKTVSYIKENYPDQFIIADAKRGDIGNTSAMYARTFFEELDIDSVTVAPYMGEDSVTPFLSYEGKWVILLALTSNKGSHDFQLTEDTNGERLFEKVLRKSQEWANDENMMYVVGATQGRAFEDIRKIVPNHFLLVPGIGAQGGSLEEVCKYGMNSTCGLIVNSSRAIIYADKTENFATVAGQEAQKVQAQMEKIMCQ.

Lys96 acts as the Proton donor in catalysis.

It belongs to the OMP decarboxylase family. Type 2 subfamily.

The enzyme catalyses orotidine 5'-phosphate + H(+) = UMP + CO2. Its pathway is pyrimidine metabolism; UMP biosynthesis via de novo pathway; UMP from orotate: step 2/2. In Phocaeicola vulgatus (strain ATCC 8482 / DSM 1447 / JCM 5826 / CCUG 4940 / NBRC 14291 / NCTC 11154) (Bacteroides vulgatus), this protein is Orotidine 5'-phosphate decarboxylase.